A 372-amino-acid polypeptide reads, in one-letter code: Cytochrome b (372 aa).

A run of 4 helical transmembrane segments spans residues 25 to 45, 69 to 90, 105 to 125, and 170 to 190; these read FGSM…FLAI, WMMQ…YIHI, WLSG…GYVL, and FFAL…IHIM. Heme b contacts are provided by H75 and H89. The heme b site is built by H174 and H188. H193 lines the a ubiquinone pocket. Transmembrane regions (helical) follow at residues 218 to 238, 280 to 300, 312 to 332, and 339 to 358; these read HKDM…MSFM, LGGT…PFTH, LMQF…WAAT, and FTTI…IMNP.

This sequence belongs to the cytochrome b family. The cytochrome bc1 complex contains 3 respiratory subunits (MT-CYB, CYC1 and UQCRFS1), 2 core proteins (UQCRC1 and UQCRC2) and probably 6 low-molecular weight proteins. It depends on heme b as a cofactor.

The protein localises to the mitochondrion inner membrane. In terms of biological role, component of the ubiquinol-cytochrome c reductase complex (complex III or cytochrome b-c1 complex) that is part of the mitochondrial respiratory chain. The b-c1 complex mediates electron transfer from ubiquinol to cytochrome c. Contributes to the generation of a proton gradient across the mitochondrial membrane that is then used for ATP synthesis. The polypeptide is Cytochrome b (MT-CYB) (Pantherophis obsoletus (Black ratsnake)).